The primary structure comprises 166 residues: Regulator of ribonuclease activity A (166 aa).

Belongs to the RraA family. In terms of assembly, homotrimer. Binds to both RNA-binding sites in the C-terminal region of Rne and to RhlB.

The protein resides in the cytoplasm. Functionally, globally modulates RNA abundance by binding to RNase E (Rne) and regulating its endonucleolytic activity. Can modulate Rne action in a substrate-dependent manner by altering the composition of the degradosome. Modulates RNA-binding and helicase activities of the degradosome. The protein is Regulator of ribonuclease activity A of Histophilus somni (strain 129Pt) (Haemophilus somnus).